The sequence spans 217 residues: EF-hand domain-containing protein D2 homolog (217 aa).

The span at 1–28 (MSVSSNASSASNKDSVDSPSSTTNTDSS) shows a compositional bias: low complexity. A disordered region spans residues 1 to 29 (MSVSSNASSASNKDSVDSPSSTTNTDSSE). EF-hand domains lie at 69–104 (NQIK…LGAP) and 105–140 (QTHL…AQAG). Positions 82, 86, 93, 118, 120, 122, 124, and 129 each coordinate Ca(2+). The segment covering 191 to 204 (EQEERRREEEERAQ) has biased composition (basic and acidic residues). The disordered stretch occupies residues 191 to 217 (EQEERRREEEERAQRRQQFQQRAAIFQ). Positions 206–217 (RQQFQQRAAIFQ) are enriched in low complexity.

This is EF-hand domain-containing protein D2 homolog (Swip-1) from Drosophila melanogaster (Fruit fly).